A 462-amino-acid chain; its full sequence is Chromosomal replication initiator protein DnaA (462 aa).

The interval 1–86 is domain I, interacts with DnaA modulators; it reads MSLSLWQQCL…EVGNKPVSQN (86 aa). The tract at residues 86 to 125 is domain II; that stretch reads NDSPPQRVVTHTPVAPAPQNTSVRPSWDNTAVQPELSYRS. Residues 126–342 are domain III, AAA+ region; the sequence is NVNPKHTFDN…GALNRVIANA (217 aa). ATP-binding residues include G170, G172, K173, and T174. The interval 343–462 is domain IV, binds dsDNA; the sequence is NFTGRAITID…FSNLIRTLSS (120 aa).

This sequence belongs to the DnaA family. In terms of assembly, oligomerizes as a right-handed, spiral filament on DNA at oriC.

The protein resides in the cytoplasm. Plays an essential role in the initiation and regulation of chromosomal replication. ATP-DnaA binds to the origin of replication (oriC) to initiate formation of the DNA replication initiation complex once per cell cycle. Binds the DnaA box (a 9 base pair repeat at the origin) and separates the double-stranded (ds)DNA. Forms a right-handed helical filament on oriC DNA; dsDNA binds to the exterior of the filament while single-stranded (ss)DNA is stabiized in the filament's interior. The ATP-DnaA-oriC complex binds and stabilizes one strand of the AT-rich DNA unwinding element (DUE), permitting loading of DNA polymerase. After initiation quickly degrades to an ADP-DnaA complex that is not apt for DNA replication. Binds acidic phospholipids. The polypeptide is Chromosomal replication initiator protein DnaA (Photorhabdus laumondii subsp. laumondii (strain DSM 15139 / CIP 105565 / TT01) (Photorhabdus luminescens subsp. laumondii)).